The sequence spans 367 residues: Indole glucosinolate O-methyltransferase 5 (367 aa).

Positions 209, 232, 252, 253, and 266 each coordinate S-adenosyl-L-homocysteine. His270 serves as the catalytic Proton acceptor.

It belongs to the class I-like SAM-binding methyltransferase superfamily. Cation-independent O-methyltransferase family.

Its pathway is secondary metabolite biosynthesis. In terms of biological role, involved in indole glucosinolate biosynthesis. Catalyzes methoxylation reactions of the glucosinolate indole ring. Converts the hydroxy intermediates 4-hydroxy-indol-3-yl-methylglucosinolate (4OH-I3M) and 1-hydroxy-indol-3-yl-methylglucosinolate (1OH-I3M) to 4-methoxy-indol-3-yl-methylglucosinolate (4MO-I3M) and 1-methoxy-indol-3-yl-methylglucosinolate, respectively. The sequence is that of Indole glucosinolate O-methyltransferase 5 from Arabidopsis thaliana (Mouse-ear cress).